The chain runs to 265 residues: Acetylglutamate kinase (265 aa).

Residues 41-42, arginine 63, and asparagine 156 contribute to the substrate site; that span reads GG.

The protein belongs to the acetylglutamate kinase family. ArgB subfamily.

Its subcellular location is the cytoplasm. The catalysed reaction is N-acetyl-L-glutamate + ATP = N-acetyl-L-glutamyl 5-phosphate + ADP. It participates in amino-acid biosynthesis; L-arginine biosynthesis; N(2)-acetyl-L-ornithine from L-glutamate: step 2/4. Functionally, catalyzes the ATP-dependent phosphorylation of N-acetyl-L-glutamate. The sequence is that of Acetylglutamate kinase from Brevibacillus brevis (strain 47 / JCM 6285 / NBRC 100599).